The following is a 623-amino-acid chain: Low affinity potassium transport system protein Kup (623 aa).

Transmembrane regions (helical) follow at residues 10–30 (LSAVTLAAIGVVYGDIGTSPL), 47–67 (PDVVFGFLSLIFWMLILIVSV), 102–122 (ILVILGLIGGSFFYGEVVITP), 138–158 (PALDPYIVPCSIAVLTLLFVI), 166–186 (VGKLFAPVMLVWFLTLALLGL), 214–234 (VSFFALGAVVLAITGVEALYA), 248–268 (WFTVVLPSLVLNYFGQGALLL), 277–297 (PFFLLAPDWALIPLLILATLA), 338–358 (IYIPVINWTLYLAVVLVIVGF), 364–384 (LAAAYGIAVTGTMVITSVLFC), 396–416 (FFVYFLLVALLVIDVPMFSAN), and 420–440 (LFSGGWLPLSLGLVMFIIMTT).

It belongs to the HAK/KUP transporter (TC 2.A.72) family.

The protein resides in the cell inner membrane. The catalysed reaction is K(+)(in) + H(+)(in) = K(+)(out) + H(+)(out). In terms of biological role, responsible for the low-affinity transport of potassium into the cell. Likely operates as a K(+):H(+) symporter. In Yersinia enterocolitica serotype O:8 / biotype 1B (strain NCTC 13174 / 8081), this protein is Low affinity potassium transport system protein Kup.